Reading from the N-terminus, the 109-residue chain is Putative transposase MJ0856.1 (109 aa).

The Zn(2+) site is built by Cys-36, Cys-39, Cys-62, and Cys-65.

It belongs to the transposase 35 family.

The polypeptide is Putative transposase MJ0856.1 (Methanocaldococcus jannaschii (strain ATCC 43067 / DSM 2661 / JAL-1 / JCM 10045 / NBRC 100440) (Methanococcus jannaschii)).